We begin with the raw amino-acid sequence, 432 residues long: Glutamate-1-semialdehyde 2,1-aminomutase (432 aa).

Position 271 is an N6-(pyridoxal phosphate)lysine (K271).

It belongs to the class-III pyridoxal-phosphate-dependent aminotransferase family. HemL subfamily. As to quaternary structure, homodimer. Pyridoxal 5'-phosphate is required as a cofactor.

The protein localises to the cytoplasm. It catalyses the reaction (S)-4-amino-5-oxopentanoate = 5-aminolevulinate. It participates in porphyrin-containing compound metabolism; protoporphyrin-IX biosynthesis; 5-aminolevulinate from L-glutamyl-tRNA(Glu): step 2/2. The sequence is that of Glutamate-1-semialdehyde 2,1-aminomutase from Protochlamydia amoebophila (strain UWE25).